A 502-amino-acid polypeptide reads, in one-letter code: ATP synthase subunit alpha (502 aa).

A disordered region spans residues 115–137 (VDGLGPVETTETRPIESPAPGVM). 169–176 (GDRQTGKT) contributes to the ATP binding site.

This sequence belongs to the ATPase alpha/beta chains family. F-type ATPases have 2 components, CF(1) - the catalytic core - and CF(0) - the membrane proton channel. CF(1) has five subunits: alpha(3), beta(3), gamma(1), delta(1), epsilon(1). CF(0) has three main subunits: a(1), b(2) and c(9-12). The alpha and beta chains form an alternating ring which encloses part of the gamma chain. CF(1) is attached to CF(0) by a central stalk formed by the gamma and epsilon chains, while a peripheral stalk is formed by the delta and b chains.

It is found in the cell membrane. It carries out the reaction ATP + H2O + 4 H(+)(in) = ADP + phosphate + 5 H(+)(out). Its function is as follows. Produces ATP from ADP in the presence of a proton gradient across the membrane. The alpha chain is a regulatory subunit. The protein is ATP synthase subunit alpha of Geobacillus stearothermophilus (Bacillus stearothermophilus).